The following is a 245-amino-acid chain: NADH-quinone oxidoreductase subunit C (245 aa).

Basic and acidic residues predominate over residues 1 to 10; sequence MSAPQDRTDD. Disordered stretches follow at residues 1 to 54 and 216 to 245; these read MSAP…GYGG and PQRK…RSYQ. Positions 11–28 are enriched in low complexity; that stretch reads GGVPVPVTPAGATGGAPA. Residues 39 to 54 show a composition bias toward gly residues; the sequence is GMFGDQGTGDVSGYGG.

The protein belongs to the complex I 30 kDa subunit family. NDH-1 is composed of 14 different subunits. Subunits NuoB, C, D, E, F, and G constitute the peripheral sector of the complex.

It is found in the cell membrane. The enzyme catalyses a quinone + NADH + 5 H(+)(in) = a quinol + NAD(+) + 4 H(+)(out). NDH-1 shuttles electrons from NADH, via FMN and iron-sulfur (Fe-S) centers, to quinones in the respiratory chain. The immediate electron acceptor for the enzyme in this species is believed to be a menaquinone. Couples the redox reaction to proton translocation (for every two electrons transferred, four hydrogen ions are translocated across the cytoplasmic membrane), and thus conserves the redox energy in a proton gradient. This is NADH-quinone oxidoreductase subunit C from Salinispora tropica (strain ATCC BAA-916 / DSM 44818 / JCM 13857 / NBRC 105044 / CNB-440).